A 386-amino-acid chain; its full sequence is MAVKVLVVDDSGFFRRRVTEILSSDPNIVVVGTATNGKEAIEQALALKPDVITMDYEMPMMDGITAVRHIMQRIPTPVLMFSSLTHEGARVTLDALDAGAVDFLPKNFEDISRNPQKVKQLLCEKINSISRSNRRSSGFGSASAAPAAPAPSTLSSRASAPAPAPARAVPSRTATPAAAPAAPTSHAPAHPTTSGTAKRKAYKLVAIGTSTGGPVALQRVLTQLPANFPAPLVLIQHMPAAFTKAFAERLDKLCKISVKEAEDGDVLRPGLALLAPGGKQMMVDGRGTVKILPGDERLNYKPCVDITFGSAAKSYGDKVLSVVLTGMGADGREGARLLKQAGSTVWAQDEASCVIYGMPMAIVKAELADAIYSLDDIGRHLVEACL.

Residues 4-121 form the Response regulatory domain; that stretch reads KVLVVDDSGF…SRNPQKVKQL (118 aa). D55 is modified (4-aspartylphosphate). Low complexity predominate over residues 132-194; sequence SNRRSSGFGS…SHAPAHPTTS (63 aa). The disordered stretch occupies residues 132–197; it reads SNRRSSGFGS…PAHPTTSGTA (66 aa). The 193-residue stretch at 191 to 383 folds into the CheB-type methylesterase domain; that stretch reads PTTSGTAKRK…LDDIGRHLVE (193 aa). Residues S210, H237, and D330 contribute to the active site.

This sequence belongs to the CheB family. In terms of processing, phosphorylated by CheA. Phosphorylation of the N-terminal regulatory domain activates the methylesterase activity.

Its subcellular location is the cytoplasm. It catalyses the reaction [protein]-L-glutamate 5-O-methyl ester + H2O = L-glutamyl-[protein] + methanol + H(+). It carries out the reaction L-glutaminyl-[protein] + H2O = L-glutamyl-[protein] + NH4(+). In terms of biological role, involved in chemotaxis. Part of a chemotaxis signal transduction system that modulates chemotaxis in response to various stimuli. Catalyzes the demethylation of specific methylglutamate residues introduced into the chemoreceptors (methyl-accepting chemotaxis proteins or MCP) by CheR. Also mediates the irreversible deamidation of specific glutamine residues to glutamic acid. The polypeptide is Protein-glutamate methylesterase/protein-glutamine glutaminase 3 (Pseudomonas syringae pv. syringae (strain B728a)).